Reading from the N-terminus, the 559-residue chain is Myb/SANT-like DNA-binding domain-containing protein 2 (559 aa).

The disordered stretch occupies residues 1 to 62 (MAAPCGSELP…GSAAGSGAAA (62 aa)). A phosphoserine mark is found at serine 13, serine 24, serine 27, serine 32, and serine 48. A compositionally biased stretch (low complexity) spans 46–61 (GASPLGPGSAAGSGAA). One can recognise a Myb-like domain in the interval 103 to 173 (SWTPAETNAL…QCRERIKTLR (71 aa)). Glycyl lysine isopeptide (Lys-Gly) (interchain with G-Cter in SUMO2) cross-links involve residues lysine 268 and lysine 343. Residue serine 436 is modified to Phosphoserine.

In Mus musculus (Mouse), this protein is Myb/SANT-like DNA-binding domain-containing protein 2 (Msantd2).